We begin with the raw amino-acid sequence, 447 residues long: Argininosuccinate synthase (447 aa).

Residues 17–25 (AFSGGLDTS) and Ala-43 each bind ATP. Position 99 (Tyr-99) interacts with L-citrulline. Residues Gly-129 and Thr-131 each contribute to the ATP site. 3 residues coordinate L-aspartate: Thr-131, Asn-135, and Asp-136. Position 135 (Asn-135) interacts with L-citrulline. Residue Asp-136 participates in ATP binding. L-citrulline-binding residues include Arg-139 and Ser-192. Asp-194 provides a ligand contact to ATP. L-citrulline is bound by residues Thr-201, Glu-203, and Glu-280.

The protein belongs to the argininosuccinate synthase family. Type 2 subfamily. As to quaternary structure, homotetramer.

It is found in the cytoplasm. The catalysed reaction is L-citrulline + L-aspartate + ATP = 2-(N(omega)-L-arginino)succinate + AMP + diphosphate + H(+). Its pathway is amino-acid biosynthesis; L-arginine biosynthesis; L-arginine from L-ornithine and carbamoyl phosphate: step 2/3. This Escherichia coli O157:H7 protein is Argininosuccinate synthase (argG).